The primary structure comprises 330 residues: Ketol-acid reductoisomerase (NADP(+)) (330 aa).

A KARI N-terminal Rossmann domain is found at 2 to 182; that stretch reads VEIYYDDDAS…GGTRAGALRT (181 aa). NADP(+)-binding positions include 25–28, Ser-51, and Ser-53; that span reads YGSQ. His-108 is an active-site residue. Gly-134 is an NADP(+) binding site. Residues 183-328 form the KARI C-terminal knotted domain; that stretch reads TFTEETETDL…AKLRPLMSWI (146 aa). Mg(2+)-binding residues include Asp-191, Glu-195, Glu-227, and Glu-231. Substrate is bound at residue Ser-252.

Belongs to the ketol-acid reductoisomerase family. The cofactor is Mg(2+).

The catalysed reaction is (2R)-2,3-dihydroxy-3-methylbutanoate + NADP(+) = (2S)-2-acetolactate + NADPH + H(+). The enzyme catalyses (2R,3R)-2,3-dihydroxy-3-methylpentanoate + NADP(+) = (S)-2-ethyl-2-hydroxy-3-oxobutanoate + NADPH + H(+). It participates in amino-acid biosynthesis; L-isoleucine biosynthesis; L-isoleucine from 2-oxobutanoate: step 2/4. Its pathway is amino-acid biosynthesis; L-valine biosynthesis; L-valine from pyruvate: step 2/4. Its function is as follows. Involved in the biosynthesis of branched-chain amino acids (BCAA). Catalyzes an alkyl-migration followed by a ketol-acid reduction of (S)-2-acetolactate (S2AL) to yield (R)-2,3-dihydroxy-isovalerate. In the isomerase reaction, S2AL is rearranged via a Mg-dependent methyl migration to produce 3-hydroxy-3-methyl-2-ketobutyrate (HMKB). In the reductase reaction, this 2-ketoacid undergoes a metal-dependent reduction by NADPH to yield (R)-2,3-dihydroxy-isovalerate. This Frankia alni (strain DSM 45986 / CECT 9034 / ACN14a) protein is Ketol-acid reductoisomerase (NADP(+)).